An 885-amino-acid polypeptide reads, in one-letter code: DNA-directed RNA polymerase subunit Rpo1N (885 aa).

Zn(2+)-binding residues include cysteine 60, cysteine 63, cysteine 70, histidine 73, cysteine 100, cysteine 103, cysteine 150, and cysteine 153. Positions 464, 466, and 468 each coordinate Mg(2+).

This sequence belongs to the RNA polymerase beta' chain family. As to quaternary structure, part of the RNA polymerase complex. The cofactor is Mg(2+). Zn(2+) serves as cofactor.

The protein localises to the cytoplasm. The catalysed reaction is RNA(n) + a ribonucleoside 5'-triphosphate = RNA(n+1) + diphosphate. Functionally, DNA-dependent RNA polymerase (RNAP) catalyzes the transcription of DNA into RNA using the four ribonucleoside triphosphates as substrates. Forms the clamp head domain. The sequence is that of DNA-directed RNA polymerase subunit Rpo1N from Thermoplasma acidophilum (strain ATCC 25905 / DSM 1728 / JCM 9062 / NBRC 15155 / AMRC-C165).